The primary structure comprises 262 residues: Ribosomal RNA small subunit methyltransferase A (262 aa).

The S-adenosyl-L-methionine site is built by Asn-14, Leu-16, Gly-41, Glu-63, Asp-85, and Asn-105.

The protein belongs to the class I-like SAM-binding methyltransferase superfamily. rRNA adenine N(6)-methyltransferase family. RsmA subfamily.

It localises to the cytoplasm. It catalyses the reaction adenosine(1518)/adenosine(1519) in 16S rRNA + 4 S-adenosyl-L-methionine = N(6)-dimethyladenosine(1518)/N(6)-dimethyladenosine(1519) in 16S rRNA + 4 S-adenosyl-L-homocysteine + 4 H(+). Functionally, specifically dimethylates two adjacent adenosines (A1518 and A1519) in the loop of a conserved hairpin near the 3'-end of 16S rRNA in the 30S particle. May play a critical role in biogenesis of 30S subunits. This chain is Ribosomal RNA small subunit methyltransferase A, found in Maridesulfovibrio salexigens (strain ATCC 14822 / DSM 2638 / NCIMB 8403 / VKM B-1763) (Desulfovibrio salexigens).